A 396-amino-acid polypeptide reads, in one-letter code: LIM/homeobox protein Lhx9 (396 aa).

LIM zinc-binding domains lie at 69-130 (ALCA…RFSV) and 131-193 (QRCA…LIQG). 3 disordered regions span residues 248–272 (ENDA…RMRT), 328–365 (RQEN…TDLT), and 377–396 (SSLD…TNLF). Residues 267–326 (TKRMRTSFKHHQLRTMKSYFAINHNPDAKDLKQLAQKTGLTKRVLQVWFQNARAKFRRNV) constitute a DNA-binding region (homeobox). The span at 352–365 (LTPPSTATTLTDLT) shows a compositional bias: low complexity. Residues 384–396 (SGSPPQTTLTNLF) are compositionally biased toward polar residues.

The protein resides in the nucleus. Its function is as follows. May be involved in gonadal development. This Danio rerio (Zebrafish) protein is LIM/homeobox protein Lhx9 (lhx9).